Here is a 188-residue protein sequence, read N- to C-terminus: uncharacterized protein (188 aa).

Positions 62–77 (ITGEKPLIKLNESTEK) match the L5-specific motif motif.

It localises to the mitochondrion. This is an uncharacterized protein from Dictyostelium discoideum (Social amoeba).